The primary structure comprises 180 residues: Crossover junction endodeoxyribonuclease RuvC (180 aa).

Catalysis depends on residues Asp7, Glu66, and Asp138. Residues Asp7, Glu66, and Asp138 each contribute to the Mg(2+) site.

It belongs to the RuvC family. In terms of assembly, homodimer which binds Holliday junction (HJ) DNA. The HJ becomes 2-fold symmetrical on binding to RuvC with unstacked arms; it has a different conformation from HJ DNA in complex with RuvA. In the full resolvosome a probable DNA-RuvA(4)-RuvB(12)-RuvC(2) complex forms which resolves the HJ. It depends on Mg(2+) as a cofactor.

The protein localises to the cytoplasm. It catalyses the reaction Endonucleolytic cleavage at a junction such as a reciprocal single-stranded crossover between two homologous DNA duplexes (Holliday junction).. Functionally, the RuvA-RuvB-RuvC complex processes Holliday junction (HJ) DNA during genetic recombination and DNA repair. Endonuclease that resolves HJ intermediates. Cleaves cruciform DNA by making single-stranded nicks across the HJ at symmetrical positions within the homologous arms, yielding a 5'-phosphate and a 3'-hydroxyl group; requires a central core of homology in the junction. The consensus cleavage sequence is 5'-(A/T)TT(C/G)-3'. Cleavage occurs on the 3'-side of the TT dinucleotide at the point of strand exchange. HJ branch migration catalyzed by RuvA-RuvB allows RuvC to scan DNA until it finds its consensus sequence, where it cleaves and resolves the cruciform DNA. This Burkholderia pseudomallei (strain 668) protein is Crossover junction endodeoxyribonuclease RuvC.